The chain runs to 540 residues: CWF19-like protein 1 (540 aa).

Residues 265-326 form a disordered region; the sequence is ENPYRKSDKD…AKQPRKHPQP (62 aa). The span at 267-277 shows a compositional bias: basic and acidic residues; it reads PYRKSDKDTPK.

This sequence belongs to the CWF19 family.

This Xenopus laevis (African clawed frog) protein is CWF19-like protein 1 (cwf19l1).